The sequence spans 456 residues: tRNA-2-methylthio-N(6)-dimethylallyladenosine synthase (456 aa).

An MTTase N-terminal domain is found at 6-123 (KHVYIETYGC…LPNLIEEAQR (118 aa)). The [4Fe-4S] cluster site is built by C15, C52, C86, C160, C164, and C167. Residues 146–380 (RAEGPTAYVS…RILEMAASIS (235 aa)) enclose the Radical SAM core domain. One can recognise a TRAM domain in the interval 381 to 444 (EAMVGTEQWV…KNSLRGRLIE (64 aa)).

It belongs to the methylthiotransferase family. MiaB subfamily. As to quaternary structure, monomer. [4Fe-4S] cluster is required as a cofactor.

It localises to the cytoplasm. The enzyme catalyses N(6)-dimethylallyladenosine(37) in tRNA + (sulfur carrier)-SH + AH2 + 2 S-adenosyl-L-methionine = 2-methylsulfanyl-N(6)-dimethylallyladenosine(37) in tRNA + (sulfur carrier)-H + 5'-deoxyadenosine + L-methionine + A + S-adenosyl-L-homocysteine + 2 H(+). Its function is as follows. Catalyzes the methylthiolation of N6-(dimethylallyl)adenosine (i(6)A), leading to the formation of 2-methylthio-N6-(dimethylallyl)adenosine (ms(2)i(6)A) at position 37 in tRNAs that read codons beginning with uridine. This is tRNA-2-methylthio-N(6)-dimethylallyladenosine synthase from Dichelobacter nodosus (strain VCS1703A).